The sequence spans 267 residues: MSIPVFGLGTFRLQDQIVIDSVSQALTLGYRAIDTAQIYENEAPVGQAIQESGINRDELFITTKIWIANLSKDKLIPSLRESIQKLKTDYVDLTLIHWPSPNDEVSVAEFMSELLKAKGLGLTRQIGISNFTIDLMKQAIAAVGAEEIATNQIELSPLLQNRNVVDFAKQNGIAVTSYMTLAYGKALAEPVIKTIAEQHGATPAQVILSWAMQLGYGVIPSSTKAANLASNLLAQKLCLNAADMALIATLDRNERLVSPDGLAPKWD.

Y39 (proton donor) is an active-site residue. H97 contributes to the substrate binding site. M179–N231 contacts NADP(+).

The protein belongs to the aldo/keto reductase family. In terms of assembly, monomer.

It localises to the cytoplasm. It catalyses the reaction hydroxyacetone + NADP(+) = methylglyoxal + NADPH + H(+). Functionally, aldo-keto reductase that significantly contributes to cellular methylglyoxal detoxification by catalyzing the NADPH-dependent conversion of methylglyoxal to acetol. This Yersinia pestis protein is Methylglyoxal reductase DkgB.